Consider the following 869-residue polypeptide: MLAKAKYRKDYKQPDFTVTDIYLDFQLDPKHTVVTAITKFQRLNNEATSLCLDGHSFQFSSIKFNGEPFSDYQQDGESLTLDLKDKSADEFEIEIVTFLVPAENTSLQGLYQSGEGICTQCEAEGFRQITYMLDRPDVLARYITKITADKTKYPFLLSNGNRIASGELEDGRHWVEWNDPFPKPSYLFALVAGDFDLLQDKFITKSGREVALELYVDRGNLNRATWAMESLKKAMKWDEDRFNLEYDLDIYMIVAVDFFNMGAMENKGLNIFNSKFVLANPQTATDDDYLAIESVIAHEYFHNWTGNRVTCRDWFQLSLKEGLTVFRDQEFSSDTGSRAVNRINNVKFLRTVQFAEDASPMSHPIRPEKVIEMNNFYTVTVYEKGAEVIRMLHTLLGEQGFQKGMQLYIAENDGKAATCEDFVSAMERANNLDLNQFRRWYSQSGTPELLISDAYDEKTHTYRLTVSQSTPPTADQMEKVNLHIPLKVALYDANGTKQMLQHNGELLSDVLNVTEKDQVFEFHGIYGRPIPALLCDFSAPVKLDYDYKTEQLLGLLKFADNQFIRWDAAQMLFAQELRRNVVRFQQGEALEISPEILTALSYVLNHYEKDIELATLILTLPKEMEFAESFKTIDPDGISAARAFMQAQIAESLKDDFLRVYTHIRLNDYQVTQQDIALRVMRNLCLTYLAYTNLGNNLVQKHYNNANNMTDTLAALSVATKAALLCRDVLLADFEQKWQHDGLVMDKWFALQATRPDDNVLEIIQLLMDHPSFNFNNPNRLRSLVGSFANHNLKAFHNVSGSGYRFLTDVLIRLNESNPQVAARLIEPLIRFSRFDAQRQTLMKRALERLSVVENLSKDLFEKIEKALQ.

Substrate-binding positions include Glu122 and 262-266 (GAMEN). Residue His298 participates in Zn(2+) binding. Glu299 acts as the Proton acceptor in catalysis. Residues His302 and Glu321 each contribute to the Zn(2+) site.

The protein belongs to the peptidase M1 family. Zn(2+) is required as a cofactor.

The protein localises to the cell inner membrane. The enzyme catalyses Release of an N-terminal amino acid, Xaa-|-Yaa- from a peptide, amide or arylamide. Xaa is preferably Ala, but may be most amino acids including Pro (slow action). When a terminal hydrophobic residue is followed by a prolyl residue, the two may be released as an intact Xaa-Pro dipeptide.. Its function is as follows. Aminopeptidase N is involved in the degradation of intracellular peptides generated by protein breakdown during normal growth as well as in response to nutrient starvation. This chain is Aminopeptidase N (pepN), found in Haemophilus influenzae (strain ATCC 51907 / DSM 11121 / KW20 / Rd).